Here is a 324-residue protein sequence, read N- to C-terminus: Transcription factor MYB74 (324 aa).

HTH myb-type domains are found at residues 10–62 (KNGL…TNYL) and 63–117 (RPDI…RKRL). DNA-binding regions (H-T-H motif) lie at residues 38–62 (WRTLPKNAGLQRCGKSCRLRWTNYL) and 90–113 (WSAIAARLPGRTDNEIKNYWNTHI).

As to expression, highly expressed in flowers and at lower levels in rosette leaves and cauline leaves. Expressed at low levels in roots, stems and siliques.

Its subcellular location is the nucleus. Functionally, probable transcription factor that may function in salt stress response. The protein is Transcription factor MYB74 of Arabidopsis thaliana (Mouse-ear cress).